A 246-amino-acid polypeptide reads, in one-letter code: UPF0309 protein ABC0887 (246 aa).

An SIS domain is found at 33–212; that stretch reads MVHAIKEGKS…VLKMIEQLEE (180 aa).

This sequence belongs to the UPF0309 family.

In Shouchella clausii (strain KSM-K16) (Alkalihalobacillus clausii), this protein is UPF0309 protein ABC0887.